The chain runs to 316 residues: MSEQFQHVSVLLHESIDGLAIKPDGIYIDGTFGRGGHSRQILSQLGENGRLYSIDRDPQAIAEAKTITDPKFTIIHGPFSGLKQYVEELDLVGKIDGVLLDLGVSSPQLDDAERGFSFMKDGPLDMRMDPTSGIPVSQWLQEADVEDITWVIREFGEDKHAWRIAKGIVAYLENEENEPLTRTSQLAKLISEVAPKSFKEKKHPATRAFQAFRIYINSELDEIDTALKGALDVLAPEGRLSVISFHSLEDRMVKHFIRKESKGPQVPHGLPLTEEQIKALGSAKMKPVGKAIKPTKNEVNENVRSRSSVLRIAERL.

Residues 35–37 (GGH), aspartate 55, phenylalanine 79, aspartate 101, and glutamine 108 contribute to the S-adenosyl-L-methionine site.

The protein belongs to the methyltransferase superfamily. RsmH family.

It localises to the cytoplasm. It catalyses the reaction cytidine(1402) in 16S rRNA + S-adenosyl-L-methionine = N(4)-methylcytidine(1402) in 16S rRNA + S-adenosyl-L-homocysteine + H(+). In terms of biological role, specifically methylates the N4 position of cytidine in position 1402 (C1402) of 16S rRNA. This Aliivibrio fischeri (strain ATCC 700601 / ES114) (Vibrio fischeri) protein is Ribosomal RNA small subunit methyltransferase H.